A 971-amino-acid chain; its full sequence is Breast cancer type 2 susceptibility protein homolog (971 aa).

The span at 1 to 15 shows a compositional bias: polar residues; sequence MDQNGASGSHPNRLS. Disordered stretches follow at residues 1 to 30, 130 to 155, 349 to 395, and 420 to 466; these read MDQNGASGSHPNRLSQGRGAHARERGATVS, SRKRDPKSHKAVQNEKRRGSSGLSVQ, KLKL…DQPN, and MQCS…SSHQ. The span at 130–139 shows a compositional bias: basic residues; sequence SRKRDPKSHK. Residues 349-364 are compositionally biased toward basic and acidic residues; it reads KLKLEPSSQKEQKSSK. Polar residues-rich tracts occupy residues 375 to 392, 420 to 432, and 453 to 466; these read SKQSCDINTKNEGTTILD, MQCSNGPSTSKNA, and KQTPNKSQTISSHQ. BRCA2 repeat units follow at residues 570-604, 671-705, and 746-780; these read AEPEFCGFRTASNKAIPISEKMKIKTAEFMAEFQS, NESQFFGFRTASNKAIEITEAMEKRGAMFLAQSKA, and SETEFFGFRTASNKGIVISENTKIKVAQFMSEFQA. Positions 916–971 are disordered; it reads MERFAPKPSSTSTPLADRDLNRSKDCTKNRQDAEDMSPICMQPKKSRRLGLSRSRY. The span at 931 to 948 shows a compositional bias: basic and acidic residues; that stretch reads ADRDLNRSKDCTKNRQDA. A compositionally biased stretch (basic residues) spans 959–971; that stretch reads KKSRRLGLSRSRY.

In terms of assembly, interacts with Rad9. Interacts with spn-A/Rad51. Interacts with cyclin CycG.

The protein localises to the nucleus. Its function is as follows. Involved in and required for double-strand break repair by meiotic and mitotic homologous recombination. During meiosis, has a dual role in the repair of meiotic double-stranded breaks and the efficient activation of the meiotic recombination checkpoint. The chain is Breast cancer type 2 susceptibility protein homolog from Drosophila melanogaster (Fruit fly).